Consider the following 294-residue polypeptide: ATP phosphoribosyltransferase (294 aa).

Belongs to the ATP phosphoribosyltransferase family. Long subfamily. Requires Mg(2+) as cofactor.

The protein resides in the cytoplasm. The catalysed reaction is 1-(5-phospho-beta-D-ribosyl)-ATP + diphosphate = 5-phospho-alpha-D-ribose 1-diphosphate + ATP. It functions in the pathway amino-acid biosynthesis; L-histidine biosynthesis; L-histidine from 5-phospho-alpha-D-ribose 1-diphosphate: step 1/9. Its activity is regulated as follows. Feedback inhibited by histidine. In terms of biological role, catalyzes the condensation of ATP and 5-phosphoribose 1-diphosphate to form N'-(5'-phosphoribosyl)-ATP (PR-ATP). Has a crucial role in the pathway because the rate of histidine biosynthesis seems to be controlled primarily by regulation of HisG enzymatic activity. The protein is ATP phosphoribosyltransferase of Chlorobium chlorochromatii (strain CaD3).